A 397-amino-acid polypeptide reads, in one-letter code: MDLHSILQPISTPSASVVTAPLPATIALPSPNYYYPPVAQGHYPVNNMWSLPSNVRVISSHGAPGHQTSASQPSTVMPALETNASNAQYYPAYSVINGNNSVQVASPAYTVSHSPHSFSNPRYVAVPQKSTSPNQVCSYCEPLPNHLTKTKSCSIPPILNSSDRSPLSLPTPYPVQYSTQPVSLPQPIAAPAPPSAESSKSTISDEDVAWQLIRLGALSSNSVKSSPSKSFVSISSPVQSTVKPTKASGVVKSEKVEKRSLPPQDFGNASSSTSAKRRRPDHNHTSTLDASSSNTSLASTGPMTVSSSTVERKGKEASEVNPNSTSSVTFSDFAAAISRSRCSRCKKSKKGCDRQRPCGRCRDAGLNSEDCISDDDMPVSNARKPRGRGRGRPKTKN.

Disordered stretches follow at residues 159–203 (LNSS…KSTI) and 221–397 (NSVK…KTKN). Over residues 221 to 240 (NSVKSSPSKSFVSISSPVQS) the composition is skewed to low complexity. Composition is skewed to polar residues over residues 285–309 (TSTL…SSST) and 320–330 (VNPNSTSSVTF). The segment at residues 342–371 (CSRCKKSKKGCDRQRPCGRCRDAGLNSEDC) is a DNA-binding region (zn(2)-C6 fungal-type). Over residues 350 to 363 (KGCDRQRPCGRCRD) the composition is skewed to basic and acidic residues. A compositionally biased stretch (basic residues) spans 383 to 397 (RKPRGRGRGRPKTKN).

Its subcellular location is the nucleus. This is an uncharacterized protein from Schizosaccharomyces pombe (strain 972 / ATCC 24843) (Fission yeast).